A 342-amino-acid chain; its full sequence is Anthranilate phosphoribosyltransferase (342 aa).

5-phospho-alpha-D-ribose 1-diphosphate is bound by residues Gly83, 86–87 (GD), Thr91, 93–96 (NIST), 111–119 (KHGGRSVSS), and Ser123. Residue Gly83 participates in anthranilate binding. A Mg(2+)-binding site is contributed by Ser95. Arg169 is an anthranilate binding site. The Mg(2+) site is built by Asp228 and Glu229.

The protein belongs to the anthranilate phosphoribosyltransferase family. Homodimer. The cofactor is Mg(2+).

The enzyme catalyses N-(5-phospho-beta-D-ribosyl)anthranilate + diphosphate = 5-phospho-alpha-D-ribose 1-diphosphate + anthranilate. It functions in the pathway amino-acid biosynthesis; L-tryptophan biosynthesis; L-tryptophan from chorismate: step 2/5. In terms of biological role, catalyzes the transfer of the phosphoribosyl group of 5-phosphorylribose-1-pyrophosphate (PRPP) to anthranilate to yield N-(5'-phosphoribosyl)-anthranilate (PRA). In Chromobacterium violaceum (strain ATCC 12472 / DSM 30191 / JCM 1249 / CCUG 213 / NBRC 12614 / NCIMB 9131 / NCTC 9757 / MK), this protein is Anthranilate phosphoribosyltransferase.